We begin with the raw amino-acid sequence, 210 residues long: WASH complex subunit 3 (210 aa).

Residues 49–73 (EEKLASISLRIQQIETTLSILEAKL) adopt a coiled-coil conformation. The interval 173–210 (LDPNLLDTPDAPVPDAVKKNTLDQDDDSDDGSESSFSD) is disordered. Acidic residues predominate over residues 195–204 (DQDDDSDDGS).

It belongs to the CCDC53 family. As to quaternary structure, component of the WASH complex.

This Salmo salar (Atlantic salmon) protein is WASH complex subunit 3.